The chain runs to 788 residues: Protein FAR1-RELATED SEQUENCE 12 (788 aa).

The FAR1 1 domain maps to 57–133; it reads EFYNAYAART…QKEHNHELGG (77 aa). The segment at 127-200 is disordered; that stretch reads HNHELGGEGS…GEVSDDHHQT (74 aa). Residues 142–151 are compositionally biased toward low complexity; the sequence is PRPSRAPAPT. Basic and acidic residues predominate over residues 165 to 175; the sequence is KVVDESDRETR. The 77-residue stretch at 225-301 folds into the FAR1 2 domain; sequence QFYQAYAEVV…NKDHNHDLEP (77 aa). Positions 399–495 constitute an MULE domain; sequence SVVFDTSYRK…SAWQIREKER (97 aa). An SWIM-type zinc finger spans residues 674–710; that stretch reads HAVTFSASNLNSSCSCQMFEHEGLLCRHILKVFNLLD.

Belongs to the FHY3/FAR1 family. Expressed in hypocotyls, rosette and cauline leaves, inflorescences stems, flowers and siliques.

Its subcellular location is the nucleus. Functionally, putative transcription activator involved in regulating light control of development. This is Protein FAR1-RELATED SEQUENCE 12 (FRS12) from Arabidopsis thaliana (Mouse-ear cress).